Reading from the N-terminus, the 179-residue chain is NAD(P)H-quinone oxidoreductase subunit J (179 aa).

It belongs to the complex I 30 kDa subunit family. As to quaternary structure, NDH-1 can be composed of about 15 different subunits; different subcomplexes with different compositions have been identified which probably have different functions. Post-translationally, in at one experiment the initiator methionine has been seen to be kept and removed.

The protein resides in the cellular thylakoid membrane. It carries out the reaction a plastoquinone + NADH + (n+1) H(+)(in) = a plastoquinol + NAD(+) + n H(+)(out). It catalyses the reaction a plastoquinone + NADPH + (n+1) H(+)(in) = a plastoquinol + NADP(+) + n H(+)(out). In terms of biological role, NDH-1 shuttles electrons from an unknown electron donor, via FMN and iron-sulfur (Fe-S) centers, to quinones in the respiratory and/or the photosynthetic chain. The immediate electron acceptor for the enzyme in this species is believed to be plastoquinone. Couples the redox reaction to proton translocation, and thus conserves the redox energy in a proton gradient. Cyanobacterial NDH-1 also plays a role in inorganic carbon-concentration. The chain is NAD(P)H-quinone oxidoreductase subunit J from Synechocystis sp. (strain ATCC 27184 / PCC 6803 / Kazusa).